Here is a 318-residue protein sequence, read N- to C-terminus: Pantothenate kinase (318 aa).

Residue Gly96–Ser103 participates in ATP binding.

The protein belongs to the prokaryotic pantothenate kinase family.

Its subcellular location is the cytoplasm. It carries out the reaction (R)-pantothenate + ATP = (R)-4'-phosphopantothenate + ADP + H(+). It functions in the pathway cofactor biosynthesis; coenzyme A biosynthesis; CoA from (R)-pantothenate: step 1/5. This chain is Pantothenate kinase, found in Nitrobacter hamburgensis (strain DSM 10229 / NCIMB 13809 / X14).